Reading from the N-terminus, the 113-residue chain is Regulator of rDNA transcription protein 7 (113 aa).

Helical transmembrane passes span 13 to 35 (FLPIASFLTILNRILFQYWLFYN) and 70 to 92 (FLLGFMVQLQSCVKLLPLYLLFL).

Its subcellular location is the membrane. Its function is as follows. Identified in a screen for mutants with decreased levels of rDNA transcription. In Saccharomyces cerevisiae (strain ATCC 204508 / S288c) (Baker's yeast), this protein is Regulator of rDNA transcription protein 7 (RRT7).